We begin with the raw amino-acid sequence, 102 residues long: Ferredoxin (102 aa).

4Fe-4S ferredoxin-type domains lie at 45 to 73 and 74 to 102; these read VSVN…ELVE and TWIE…EVMK. Residues cysteine 54, cysteine 57, cysteine 60, cysteine 64, cysteine 83, cysteine 86, cysteine 89, and cysteine 93 each contribute to the [4Fe-4S] cluster site.

[4Fe-4S] cluster is required as a cofactor.

Its pathway is membrane lipid metabolism; glycerophospholipid metabolism. In terms of biological role, ferredoxin that is the specific electron donor for the geranylgeranyl reductase GGR involved in the biosynthesis of archaeal membrane lipids. The polypeptide is Ferredoxin (Methanosarcina acetivorans (strain ATCC 35395 / DSM 2834 / JCM 12185 / C2A)).